The following is a 283-amino-acid chain: Large ribosomal subunit protein uL2 (283 aa).

Positions 215–283 (RHKGIRPTVR…IRGRKKRINN (69 aa)) are disordered. A compositionally biased stretch (basic residues) spans 274-283 (IRGRKKRINN).

Belongs to the universal ribosomal protein uL2 family. In terms of assembly, part of the 50S ribosomal subunit. Forms a bridge to the 30S subunit in the 70S ribosome.

Functionally, one of the primary rRNA binding proteins. Required for association of the 30S and 50S subunits to form the 70S ribosome, for tRNA binding and peptide bond formation. It has been suggested to have peptidyltransferase activity; this is somewhat controversial. Makes several contacts with the 16S rRNA in the 70S ribosome. This is Large ribosomal subunit protein uL2 from Mycoplasma mobile (strain ATCC 43663 / 163K / NCTC 11711) (Mesomycoplasma mobile).